A 112-amino-acid polypeptide reads, in one-letter code: Divalent-cation tolerance protein CutA (112 aa).

Cu cation-binding residues include Cys16, His83, and His84.

This sequence belongs to the CutA family. Homotrimer. The cofactor is Cu cation.

It localises to the cytoplasm. Involved in resistance toward heavy metals. The chain is Divalent-cation tolerance protein CutA from Escherichia coli O81 (strain ED1a).